The primary structure comprises 357 residues: Thiamine thiazole synthase 1, chloroplastic (357 aa).

Residues 1–51 (MSISAAGVATGLGANVELKSNVGSSSSSVAGVRLFTSRKAQLRRCAAPATS) constitute a chloroplast transit peptide. Substrate is bound by residues Ala-103, 123 to 124 (EQ), Gly-131, and Ala-196. At Cys-225 the chain carries 2,3-didehydroalanine (Cys). Substrate-binding positions include Asp-227, His-242, Met-294, and 304-306 (RMG).

Belongs to the THI4 family. As to quaternary structure, homooctamer. The cofactor is Fe cation. In terms of processing, during the catalytic reaction, a sulfide is transferred from Cys-225 to a reaction intermediate, generating a dehydroalanine residue.

It localises to the plastid. It is found in the chloroplast. The enzyme catalyses [ADP-thiazole synthase]-L-cysteine + glycine + NAD(+) = [ADP-thiazole synthase]-dehydroalanine + ADP-5-ethyl-4-methylthiazole-2-carboxylate + nicotinamide + 3 H2O + 2 H(+). Its function is as follows. Involved in biosynthesis of the thiamine precursor thiazole. Catalyzes the conversion of NAD and glycine to adenosine diphosphate 5-(2-hydroxyethyl)-4-methylthiazole-2-carboxylic acid (ADT), an adenylated thiazole intermediate. The reaction includes an iron-dependent sulfide transfer from a conserved cysteine residue of the protein to a thiazole intermediate. The enzyme can only undergo a single turnover, which suggests it is a suicide enzyme. May have additional roles in adaptation to various stress conditions and in DNA damage tolerance. The sequence is that of Thiamine thiazole synthase 1, chloroplastic from Physcomitrium patens (Spreading-leaved earth moss).